The primary structure comprises 1305 residues: Serine protease EspC (1305 aa).

An N-terminal signal peptide occupies residues 1–53; it reads MNKIYALKYCHATGGLIAVSELASRVMKKAARGSLLALFNLSLYGAFLSASQA. Positions 55-297 constitute a Peptidase S6 domain; sequence QLNIDNVWAR…SILNQYDENT (243 aa). Residues H125, D153, and S256 each act as charge relay system in the active site. One can recognise an Autotransporter domain in the interval 1039 to 1305; the sequence is DTQGDAGVWA…AINANFRYSF (267 aa).

In terms of processing, cleaved to release the mature protein from the outer membrane.

Its subcellular location is the periplasm. The protein localises to the secreted. It is found in the cell surface. It localises to the cell outer membrane. With respect to regulation, inhibition of cytotoxic activity by phenylmethylsulfonyl fluoride. In terms of biological role, serine protease with enterotoxic and cytotoxic activities. Cleaves fodrin, but does not cause its redistribution within epithelial cells. The exact role of EspC in EPEC pathogenesis is still unknown. The protein is Serine protease EspC (espC) of Escherichia coli O127:H6 (strain E2348/69 / EPEC).